The following is a 496-amino-acid chain: Probable malate:quinone oxidoreductase (496 aa).

The protein belongs to the MQO family. Requires FAD as cofactor.

The catalysed reaction is (S)-malate + a quinone = a quinol + oxaloacetate. It participates in carbohydrate metabolism; tricarboxylic acid cycle; oxaloacetate from (S)-malate (quinone route): step 1/1. This is Probable malate:quinone oxidoreductase from Prochlorococcus marinus (strain MIT 9313).